A 185-amino-acid chain; its full sequence is Large ribosomal subunit protein uL22 (185 aa).

Positions 157–185 (VAAPTPDEDAPKKKQSKKKMARQKLMQRD) are disordered. Over residues 169–178 (KKQSKKKMAR) the composition is skewed to basic residues.

Belongs to the universal ribosomal protein uL22 family.

The polypeptide is Large ribosomal subunit protein uL22 (RpL17) (Argas monolakensis (Mono lake bird tick)).